We begin with the raw amino-acid sequence, 177 residues long: Adenine phosphoribosyltransferase (177 aa).

Belongs to the purine/pyrimidine phosphoribosyltransferase family. In terms of assembly, homodimer.

The protein localises to the cytoplasm. It catalyses the reaction AMP + diphosphate = 5-phospho-alpha-D-ribose 1-diphosphate + adenine. Its pathway is purine metabolism; AMP biosynthesis via salvage pathway; AMP from adenine: step 1/1. Catalyzes a salvage reaction resulting in the formation of AMP, that is energically less costly than de novo synthesis. This is Adenine phosphoribosyltransferase from Pelodictyon phaeoclathratiforme (strain DSM 5477 / BU-1).